A 290-amino-acid polypeptide reads, in one-letter code: GTPase Era (290 aa).

Residues 2–167 form the Era-type G domain; sequence KSGFVSIVGR…LDELVKYLPE (166 aa). The interval 10–17 is G1; it reads GRTNAGKS. Residue 10-17 coordinates GTP; sequence GRTNAGKS. A G2 region spans residues 36–40; the sequence is NATRR. The tract at residues 57-60 is G3; it reads DTPG. Residues 57 to 61 and 116 to 119 each bind GTP; these read DTPGL and NKVD. A G4 region spans residues 116-119; it reads NKVD. The tract at residues 146 to 148 is G5; sequence YSI. Residues 194–274 enclose the KH type-2 domain; it reads IYENLSDEIP…MLKLFVQLEK (81 aa).

It belongs to the TRAFAC class TrmE-Era-EngA-EngB-Septin-like GTPase superfamily. Era GTPase family. As to quaternary structure, monomer.

The protein resides in the cytoplasm. It localises to the cell inner membrane. Functionally, an essential GTPase that binds both GDP and GTP, with rapid nucleotide exchange. Plays a role in 16S rRNA processing and 30S ribosomal subunit biogenesis and possibly also in cell cycle regulation and energy metabolism. This Campylobacter lari (strain RM2100 / D67 / ATCC BAA-1060) protein is GTPase Era.